Consider the following 573-residue polypeptide: Thiol:disulfide interchange protein DsbD (573 aa).

The signal sequence occupies residues 1-20; sequence MLKRFFLLLSSLLLVCNVQA. Residues 21–175 are Periplasmic-facing; it reads GLFNNKPQYL…AENLSNNYLS (155 aa). Intrachain disulfides connect Cys-121–Cys-126 and Cys-191–Cys-313. Residues 176-196 traverse the membrane as a helical segment; the sequence is IFGFLLLGIGLAFTPCVLPML. Residues 197–227 lie on the Cytoplasmic side of the membrane; that stretch reads PLLSAIVIGHKNRPNTSRALLLSFTYVQGMA. The chain crosses the membrane as a helical span at residues 228 to 248; the sequence is LTYTLLGLTVAAIGLPFQVAL. Residues 249 to 251 lie on the Periplasmic side of the membrane; sequence QSP. Residues 252 to 272 traverse the membrane as a helical segment; it reads AVLISLAVLFTLLAASMFGLF. Residues 273–292 are Cytoplasmic-facing; that stretch reads EIRLPNTWQQKLNALSQQQQ. A helical transmembrane segment spans residues 293 to 313; it reads GGAVGNVFIMGIIAGLVASPC. The Periplasmic portion of the chain corresponds to 314-331; the sequence is TSAPLSGALLYVAQSGNL. The chain crosses the membrane as a helical span at residues 332–352; sequence LIGGLALYLLALGMGLPLILI. Residues 353–365 are Cytoplasmic-facing; it reads TVFGNQILPKSGE. The chain crosses the membrane as a helical span at residues 366-386; the sequence is WLFKVKTAFGFVMLALPIFLI. At 387–393 the chain is on the periplasmic side; it reads SRILPSH. Residues 394-414 traverse the membrane as a helical segment; that stretch reads YEPFLWSTLALAFLGWLISSL. The Cytoplasmic portion of the chain corresponds to 415–425; it reads NYSTMLKQAVR. Residues 426–446 traverse the membrane as a helical segment; sequence ILLFIAFGLTAYPWANLVWQT. Residues 440–573 enclose the Thioredoxin domain; that stretch reads ANLVWQTTSN…NQFLAWLNRL (134 aa). Residues 447–573 are Periplasmic-facing; sequence TSNTAQPTTP…NQFLAWLNRL (127 aa). Cysteines 490 and 493 form a disulfide.

It belongs to the thioredoxin family. DsbD subfamily.

The protein localises to the cell inner membrane. The catalysed reaction is [protein]-dithiol + NAD(+) = [protein]-disulfide + NADH + H(+). It catalyses the reaction [protein]-dithiol + NADP(+) = [protein]-disulfide + NADPH + H(+). Required to facilitate the formation of correct disulfide bonds in some periplasmic proteins and for the assembly of the periplasmic c-type cytochromes. Acts by transferring electrons from cytoplasmic thioredoxin to the periplasm. This transfer involves a cascade of disulfide bond formation and reduction steps. This is Thiol:disulfide interchange protein DsbD from Haemophilus ducreyi (strain 35000HP / ATCC 700724).